A 158-amino-acid chain; its full sequence is Transcription elongation factor GreA (158 aa).

A coiled-coil region spans residues E5 to Q75.

This sequence belongs to the GreA/GreB family.

Its function is as follows. Necessary for efficient RNA polymerase transcription elongation past template-encoded arresting sites. The arresting sites in DNA have the property of trapping a certain fraction of elongating RNA polymerases that pass through, resulting in locked ternary complexes. Cleavage of the nascent transcript by cleavage factors such as GreA or GreB allows the resumption of elongation from the new 3'terminus. GreA releases sequences of 2 to 3 nucleotides. This Novosphingobium aromaticivorans (strain ATCC 700278 / DSM 12444 / CCUG 56034 / CIP 105152 / NBRC 16084 / F199) protein is Transcription elongation factor GreA.